The primary structure comprises 84 residues: U21-theraphotoxin-Cg1b (84 aa).

The signal sequence occupies residues 1–21 (MKVSVLITLAVLGVMFLLTSA). Positions 22 to 47 (EERGSDQMDSPAWLKSMERIFQSEER) are excised as a propeptide. 3 cysteine pairs are disulfide-bonded: C49–C63, C56–C68, and C62–C76. Phenylalanine amide is present on F82.

Belongs to the neurotoxin 10 (Hwtx-1) family. 05 (F4a) subfamily. As to expression, expressed by the venom gland.

The protein localises to the secreted. Probable ion channel inhibitor. The protein is U21-theraphotoxin-Cg1b of Chilobrachys guangxiensis (Chinese earth tiger tarantula).